We begin with the raw amino-acid sequence, 278 residues long: UPF0750 membrane protein YxkD (278 aa).

Helical transmembrane passes span 8–28, 46–66, 77–97, 101–121, and 145–165; these read VLML…FAIP, LFQW…LLIG, YTII…GWSI, ELII…GMII, and ISYA…FIIG.

The protein belongs to the UPF0750 family.

It is found in the cell membrane. The protein is UPF0750 membrane protein YxkD (yxkD) of Bacillus subtilis (strain 168).